The chain runs to 123 residues: Potassium voltage-gated channel subfamily E member 2 (123 aa).

N-linked (GlcNAc...) asparagine glycans are attached at residues asparagine 6 and asparagine 29. A helical transmembrane segment spans residues 49 to 69; that stretch reads VILYLMVMIGMFSFIIVAILV. Over 70–123 the chain is Cytoplasmic; it reads STVKSKRREHSNDPYHQYIVEDWQEKYKSQILNLEESKATIHENIGAAGFKMSP.

This sequence belongs to the potassium channel KCNE family. In terms of assembly, interacts with KCNB1. Associates with KCNH2/ERG1. May associate with KCNQ2 and KCNQ3. Associates with HCN1 and probably HCN2. Heteromultimer with KCNC2. Interacts with KCNC2. Interacts with KCNQ1; forms a heterooligomer complex that targets to the membrane raft and leading to currents with an apparently instantaneous activation, a rapid deactivation process and a linear current-voltage relationship and decreases the amplitude of the outward current. As to expression, highly expressed in brain, heart, skeletal muscle, pancreas, placenta, kidney, colon and thymus. A small but significant expression is found in liver, ovary, testis, prostate, small intestine and leukocytes. Very low expression, nearly undetectable, in lung and spleen.

The protein localises to the cell membrane. It localises to the apical cell membrane. In terms of biological role, ancillary protein that functions as a regulatory subunit of the voltage-gated potassium (Kv) channel complex composed of pore-forming and potassium-conducting alpha subunits and of regulatory beta subunits. KCNE2 beta subunit modulates the gating kinetics and enhances stability of the channel complex. Alters the gating of the delayed rectifier Kv channel containing KCNB1 alpha subunit. Associates with KCNH2/HERG alpha subunit Kv channel to form the rapidly activating component of the delayed rectifying potassium current (IKr) in heart. May associate with KCNQ2 and/or KCNQ3 alpha subunits to modulate the native M-type current. May associate with HCN1 and HCN2 channel subunits to increase potassium current. Forms a heterooligomer complex with KCNQ1/KVLQT1 alpha subunits which leads to currents with an apparently instantaneous activation, a rapid deactivation process and a linear current-voltage relationship and decreases the amplitude of the outward current. KCNQ1-KCNE2 channel associates with Na(+)-coupled myo-inositol symporter in the apical membrane of choroid plexus epithelium and regulates the myo-inositol gradient between blood and cerebrospinal fluid with an impact on neuron excitability. The chain is Potassium voltage-gated channel subfamily E member 2 from Homo sapiens (Human).